The following is a 103-amino-acid chain: MSATPEEDKKPDQGAHINLKVKGQDGNEVFFRIKRSTQLKKLMNAYCDRQSVDFNSIAFLFDGRRLRAEQTPDELEMEDGDEIDAMLHQTGGGAKNGLKLFCF.

The region spanning 15–92 is the Ubiquitin-like domain; the sequence is AHINLKVKGQ…IDAMLHQTGG (78 aa). G92 participates in a covalent cross-link: Glycyl lysine isopeptide (Gly-Lys) (interchain with K-? in acceptor proteins).

It belongs to the ubiquitin family. SUMO subfamily. As to quaternary structure, interacts with SAE2, SCE1, SIZ1 and MMS21. Interacts with HSFA2. Covalently attached to ABI5, FLD, GTE3, HSFA2 and ICE1.

It localises to the nucleus. It is found in the cytoplasm. Its function is as follows. Ubiquitin-like protein which can be covalently attached to target lysines as a monomer. Does not seem to be involved in protein degradation and may function as an antagonist of ubiquitin in the degradation process. Required for the massive protein sumoylation in the nucleus induced by heat shock and controlled by SIZ1. The polypeptide is Small ubiquitin-related modifier 2 (Arabidopsis thaliana (Mouse-ear cress)).